The primary structure comprises 618 residues: Sodium/iodide cotransporter (618 aa).

At 1 to 14 (MEGAEAGARATFGP) the chain is on the extracellular side. A helical membrane pass occupies residues 15 to 31 (WDYGVFATMLLVSTGIG). The Cytoplasmic segment spans residues 32 to 56 (LWVGLARGGQRSADDFFTGGRQLAA). Residues 57–80 (VPVGLSLAASFMSAVQVLGVPAEA) form a discontinuously helical membrane-spanning segment. Ser69, Val71, and Gln72 together coordinate Na(+). Val76 contributes to the iodide binding site. Residues 81-84 (ARYG) are Extracellular-facing. Residues 85-105 (LKFLWMCVGQLLNSLLTALLF) traverse the membrane as a helical segment. Met90 contributes to the iodide binding site. Residues 106 to 130 (LPIFYRLGLTSTYQYLELRFSRAVR) lie on the Cytoplasmic side of the membrane. The chain crosses the membrane as a helical span at residues 131-157 (LCGTLQYLVATMLYTGIVIYAPALILN). Tyr144 contributes to the Na(+) binding site. Residues 158 to 163 (QVTGLD) lie on the Extracellular side of the membrane. The chain crosses the membrane as a helical span at residues 164–181 (IWASLLSTGIICTLYTTV). Residues 182 to 189 (GGMKAVVW) are Cytoplasmic-facing. A helical membrane pass occupies residues 190–208 (TDVFQVVVMLVGFWVILAR). Residues 209 to 243 (GVMLMGGPWNVLSLAQNHSRINLMDFDPDPRSRYT) are Extracellular-facing. A discontinuously helical transmembrane segment spans residues 244-266 (FWTFVVGGSLVWLSMYGVNQAQV). Trp255 contacts iodide. Met258 serves as a coordination point for Na(+). Over 267 to 278 (QRYVACHTERKA) the chain is Cytoplasmic. The chain crosses the membrane as a helical span at residues 279-301 (KLALLVNQLGLFLIVASAACCGI). Residues 302-335 (VMFVYYKDCDPLLTGRIAAPDQYMPLLVLDIFED) lie on the Extracellular side of the membrane. Residues 336 to 363 (LPGVPGLFLACAYSGTLSTASTSINAMA) traverse the membrane as a helical segment. At 364-386 (AVTVEDLIKPRMPSLAPRKLVFI) the chain is on the cytoplasmic side. The helical transmembrane segment at 387–408 (SKGLSFIYGSTCLTVAALSSLL) threads the bilayer. Residues 409-411 (GGG) lie on the Extracellular side of the membrane. The helical transmembrane segment at 412–437 (VLQGSFTVMGVISGPLLGAFTLGMLL) threads the bilayer. Leu413 provides a ligand contact to iodide. Na(+) contacts are provided by Ser416 and Phe417. Residue Phe417 participates in iodide binding. Residues 438-441 (PACN) are Cytoplasmic-facing. The helical transmembrane segment at 442 to 465 (TPGVLSGLTAGLAVSLWVAVGATL) threads the bilayer. The Extracellular segment spans residues 466–520 (YPPGEQTMGVLPTSAAGCTNASVLPSPPGAANTSRGIPSSGMDSGRPAFADTFYA). 2 N-linked (GlcNAc...) asparagine glycosylation sites follow: Asn485 and Asn497. The chain crosses the membrane as a helical span at residues 521-545 (VSYLYYGALGTLTTMLCGALISYLT). The Cytoplasmic portion of the chain corresponds to 546-618 (GPTKRSSLGP…YLGHDVETNL (73 aa)). Ser551 bears the Phosphoserine; by PKA mark. Residues 571–587 (PKEDTTTLEDSLVKGPE) show a composition bias toward basic and acidic residues. The tract at residues 571 to 618 (PKEDTTTLEDSLVKGPEDIPAATKKPPGFRPEAETHPLYLGHDVETNL) is disordered.

It belongs to the sodium:solute symporter (SSF) (TC 2.A.21) family. Monomer. Glycosylated.

The protein localises to the cell membrane. It is found in the cytoplasm. It carries out the reaction iodide(out) + 2 Na(+)(out) = iodide(in) + 2 Na(+)(in). The catalysed reaction is chlorate(out) + 2 Na(+)(out) = chlorate(in) + 2 Na(+)(in). It catalyses the reaction thiocyanate(out) + 2 Na(+)(out) = thiocyanate(in) + 2 Na(+)(in). The enzyme catalyses nitrate(out) + 2 Na(+)(out) = nitrate(in) + 2 Na(+)(in). It carries out the reaction selenocyanate(out) + 2 Na(+)(out) = selenocyanate(in) + 2 Na(+)(in). Perchlorate inhibits iodide transport activity. Oxyanions inhibit iodide transport activity by blocking the binding sites for iodide and one of the sodium ions. Sodium:iodide symporter that mediates the transport of iodide into the thyroid gland. Can also mediate the transport of chlorate, thiocynate, nitrate and selenocynate. In Mus musculus (Mouse), this protein is Sodium/iodide cotransporter (Slc5a5).